A 353-amino-acid chain; its full sequence is DNA polymerase IV (353 aa).

One can recognise a UmuC domain in the interval 4–185; sequence IIHVDMDCFF…LPLSKIPGVG (182 aa). Residues Asp8 and Asp103 each coordinate Mg(2+). Residue Glu104 is part of the active site.

The protein belongs to the DNA polymerase type-Y family. In terms of assembly, monomer. Requires Mg(2+) as cofactor.

It is found in the cytoplasm. It carries out the reaction DNA(n) + a 2'-deoxyribonucleoside 5'-triphosphate = DNA(n+1) + diphosphate. Functionally, poorly processive, error-prone DNA polymerase involved in untargeted mutagenesis. Copies undamaged DNA at stalled replication forks, which arise in vivo from mismatched or misaligned primer ends. These misaligned primers can be extended by PolIV. Exhibits no 3'-5' exonuclease (proofreading) activity. May be involved in translesional synthesis, in conjunction with the beta clamp from PolIII. The protein is DNA polymerase IV of Serratia proteamaculans (strain 568).